The sequence spans 156 residues: Transcriptional repressor NrdR (156 aa).

Residues 3-34 fold into a zinc finger; sequence CPKCNSTHSRVVDSRHADEANAIRRRRECENC. The ATP-cone domain maps to 49–139; the sequence is LIVVKKDGTR…VYKEFKDVDQ (91 aa).

This sequence belongs to the NrdR family. The cofactor is Zn(2+).

Functionally, negatively regulates transcription of bacterial ribonucleotide reductase nrd genes and operons by binding to NrdR-boxes. In Staphylococcus epidermidis (strain ATCC 35984 / DSM 28319 / BCRC 17069 / CCUG 31568 / BM 3577 / RP62A), this protein is Transcriptional repressor NrdR.